The following is a 460-amino-acid chain: GTPase Der (460 aa).

2 EngA-type G domains span residues Gln-2–Phe-164 and Ile-196–Thr-368. GTP contacts are provided by residues Gly-8–Ser-15, Asp-55–Leu-59, Asn-116–Asp-119, Gly-202–Ser-209, Asp-249–Ile-253, and Asn-313–Asp-316. The KH-like domain occupies Gln-369–Gly-453.

It belongs to the TRAFAC class TrmE-Era-EngA-EngB-Septin-like GTPase superfamily. EngA (Der) GTPase family. In terms of assembly, associates with the 50S ribosomal subunit.

In terms of biological role, GTPase that plays an essential role in the late steps of ribosome biogenesis. In Campylobacter jejuni subsp. jejuni serotype O:6 (strain 81116 / NCTC 11828), this protein is GTPase Der.